A 166-amino-acid polypeptide reads, in one-letter code: Interleukin-3 (166 aa).

Residues 1–26 (MVLASSTTSIHTMLLLLLMLFHLGLQ) form the signal peptide. Residue asparagine 42 is glycosylated (N-linked (GlcNAc...) asparagine). 2 disulfide bridges follow: cysteine 43-cysteine 106 and cysteine 105-cysteine 166. N-linked (GlcNAc...) asparagine; partial glycosylation occurs at asparagine 112. Residues 145–166 (LTSRPPQPASGSVSPNRGTVEC) are disordered.

The protein belongs to the IL-3 family. Monomer. As to expression, activated T-cells, mast cells, natural killer cells.

It localises to the secreted. Functionally, cytokine secreted predominantly by activated T-lymphocytes as well as mast cells and osteoblastic cells that controls the production and differentiation of hematopoietic progenitor cells into lineage-restricted cells. Also stimulates mature basophils, eosinophils, and monocytes to become functionally activated. In addition, plays an important role in neural cell proliferation and survival. Participates as well in bone homeostasis and inhibits osteoclast differentiation by preventing NF-kappa-B nuclear translocation and activation. Mechanistically, exerts its biological effects through a receptor composed of IL3RA subunit and a signal transducing subunit IL3RB. Receptor stimulation results in the rapid activation of JAK2 kinase activity leading to STAT5-mediated transcriptional program. Alternatively, contributes to cell survival under oxidative stress in non-hematopoietic systems by activating pathways mediated by PI3K/AKT and ERK. This chain is Interleukin-3 (Il3), found in Mus musculus (Mouse).